Consider the following 1442-residue polypeptide: CD109 antigen (1442 aa).

A signal peptide spans 1–21 (MRSRRLLSAAHLLCLCAVALA). N-linked (GlcNAc...) asparagine glycosylation is found at N67, N117, N246, N278, N370, and N421. Residues 595-704 (DKSVTLMENS…TWIWLDAYMG (110 aa)) are bait region (approximate). A cross-link (isoglutamyl cysteine thioester (Cys-Gln)) is located at residues 923 to 926 (CGEQ). N-linked (GlcNAc...) asparagine glycosylation is present at N1088. The GPI-anchor amidated alanine moiety is linked to residue A1419. Residues 1420–1442 (TDSLRRSSSLLVFCSVLLYFVQH) constitute a propeptide, removed in mature form.

Belongs to the protease inhibitor I39 (alpha-2-macroglobulin) family. In terms of assembly, heterodimer; disulfide-linked. Interacts with TGFB1 and TGFBR1. Forms a heteromeric complex with TGFBR1, TGFBR2 and TGFBR3 in a ligand-independent manner. Post-translationally, N-glycosylated. In terms of processing, 2 forms of 150 (p150) and 120 kDa (p120) exist due to proteolytic degradation from a 180 kDa form.

Its subcellular location is the cell membrane. Its function is as follows. Modulates negatively TGFB1 signaling in keratinocytes. The polypeptide is CD109 antigen (Cd109) (Mus musculus (Mouse)).